We begin with the raw amino-acid sequence, 274 residues long: Putative pyruvate, phosphate dikinase regulatory protein (274 aa).

Position 150–157 (150–157 (GPSRTSKT)) interacts with ADP.

This sequence belongs to the pyruvate, phosphate/water dikinase regulatory protein family. PDRP subfamily.

It catalyses the reaction N(tele)-phospho-L-histidyl/L-threonyl-[pyruvate, phosphate dikinase] + ADP = N(tele)-phospho-L-histidyl/O-phospho-L-threonyl-[pyruvate, phosphate dikinase] + AMP + H(+). It carries out the reaction N(tele)-phospho-L-histidyl/O-phospho-L-threonyl-[pyruvate, phosphate dikinase] + phosphate + H(+) = N(tele)-phospho-L-histidyl/L-threonyl-[pyruvate, phosphate dikinase] + diphosphate. Bifunctional serine/threonine kinase and phosphorylase involved in the regulation of the pyruvate, phosphate dikinase (PPDK) by catalyzing its phosphorylation/dephosphorylation. The chain is Putative pyruvate, phosphate dikinase regulatory protein from Rickettsia peacockii (strain Rustic).